Reading from the N-terminus, the 122-residue chain is MIQSQTYLNIVDNSGARKIMCIRVVGASYQRYAHIGNVIIAVIKEAVPNTKMEESEIVRAVIIRTSKEFQRDDGMRIRSDDNAAIIIDQKGNPKGTRVFGPVLQELRQYNFTKIISLAPEVL.

Belongs to the universal ribosomal protein uL14 family. As to quaternary structure, part of the 50S ribosomal subunit.

The protein localises to the plastid. It is found in the chloroplast. Functionally, binds to 23S rRNA. This chain is Large ribosomal subunit protein uL14c, found in Welwitschia mirabilis (Tree tumbo).